Reading from the N-terminus, the 154-residue chain is MQHYETVEAVTFAYGQRHHLEIQITREIAKEQGIRHHILDMSLLGQITAQPDFATIHISYIPDKLCVESKSLKLYLFSYRNHGDFHENCINTIGKDLVNLLDPRYLEVWGKFTPRGGISIDPYYNYGKQGTKYEGLAEQRLFQHDLYPEKIDNR.

Catalysis depends on Asp52, which acts as the Proton donor. Residues 67–69 (VES) and 86–87 (HE) contribute to the substrate site.

The protein belongs to the GTP cyclohydrolase I family. QueF type 1 subfamily.

It is found in the cytoplasm. It carries out the reaction 7-aminomethyl-7-carbaguanine + 2 NADP(+) = 7-cyano-7-deazaguanine + 2 NADPH + 3 H(+). It participates in tRNA modification; tRNA-queuosine biosynthesis. Functionally, catalyzes the NADPH-dependent reduction of 7-cyano-7-deazaguanine (preQ0) to 7-aminomethyl-7-deazaguanine (preQ1). This is Putative NADPH-dependent 7-cyano-7-deazaguanine reductase from Streptococcus pneumoniae serotype 4 (strain ATCC BAA-334 / TIGR4).